The chain runs to 203 residues: Methyltransferase-like 26 (203 aa).

This sequence belongs to the UPF0585 family.

The sequence is that of Methyltransferase-like 26 from Xenopus tropicalis (Western clawed frog).